The sequence spans 538 residues: Zinc finger protein 155 (538 aa).

A KRAB domain is found at 8 to 78 (VTFKDVAVVF…GTATQREGNS (71 aa)). C2H2-type zinc fingers lie at residues 176 to 198 (YTCD…QRVH), 204 to 226 (FMCD…QRVH), 232 to 254 (FKCE…RKLH), 260 to 282 (YICE…KRIH), 288 to 310 (FKCD…SMVH), 316 to 338 (FRCD…CMVH), 344 to 366 (YRCE…QVVH), 372 to 394 (YNCK…QRVH), 400 to 422 (FKCE…QRSH), 428 to 450 (YKCE…QRVH), and 456 to 478 (YNCK…KRLH). A C2H2-type 12; degenerate zinc finger spans residues 484–506 (FKCEDCGKRLVHRTYRKDQPRDY).

This sequence belongs to the krueppel C2H2-type zinc-finger protein family.

It localises to the nucleus. Its function is as follows. May be involved in transcriptional regulation. The sequence is that of Zinc finger protein 155 (ZNF155) from Homo sapiens (Human).